A 398-amino-acid polypeptide reads, in one-letter code: Acetate kinase (398 aa).

Residue Asn-8 participates in Mg(2+) binding. Lys-15 contributes to the ATP binding site. Substrate is bound at residue Arg-92. Asp-149 acts as the Proton donor/acceptor in catalysis. Residues 209–213 (HLGNG), 283–285 (DFR), and 331–335 (GVGEN) each bind ATP. Glu-385 contacts Mg(2+).

This sequence belongs to the acetokinase family. Homodimer. Mg(2+) serves as cofactor. Mn(2+) is required as a cofactor.

The protein localises to the cytoplasm. The catalysed reaction is acetate + ATP = acetyl phosphate + ADP. It participates in metabolic intermediate biosynthesis; acetyl-CoA biosynthesis; acetyl-CoA from acetate: step 1/2. Its function is as follows. Catalyzes the formation of acetyl phosphate from acetate and ATP. Can also catalyze the reverse reaction. The polypeptide is Acetate kinase (Corynebacterium efficiens (strain DSM 44549 / YS-314 / AJ 12310 / JCM 11189 / NBRC 100395)).